The following is a 36-amino-acid chain: Photosystem II reaction center protein M (36 aa).

A helical transmembrane segment spans residues 5-25 (ILAFIATALFILVPTAFLLII).

The protein belongs to the PsbM family. In terms of assembly, PSII is composed of 1 copy each of membrane proteins PsbA, PsbB, PsbC, PsbD, PsbE, PsbF, PsbH, PsbI, PsbJ, PsbK, PsbL, PsbM, PsbT, PsbX, PsbY, PsbZ, Psb30/Ycf12, at least 3 peripheral proteins of the oxygen-evolving complex and a large number of cofactors. It forms dimeric complexes.

The protein localises to the plastid. Its subcellular location is the chloroplast thylakoid membrane. In terms of biological role, one of the components of the core complex of photosystem II (PSII). PSII is a light-driven water:plastoquinone oxidoreductase that uses light energy to abstract electrons from H(2)O, generating O(2) and a proton gradient subsequently used for ATP formation. It consists of a core antenna complex that captures photons, and an electron transfer chain that converts photonic excitation into a charge separation. This subunit is found at the monomer-monomer interface. The sequence is that of Photosystem II reaction center protein M from Panax ginseng (Korean ginseng).